The chain runs to 264 residues: Apolipoprotein A-I (264 aa).

Positions 1–18 (MKAVVLAVAVLFLTGSQA) are cleaved as a signal peptide. A run of 2 repeats spans residues 67–88 (LNLLANWNTLTSTFNNLREQLG) and 89–110 (SVTKEFWDNLGEDTVWLRQQMN). The 10 X approximate tandem repeats stretch occupies residues 67–264 (LNLLANWNTL…DQASKQLSAQ (198 aa)). At Met-109 the chain carries Methionine sulfoxide. Residues 111 to 121 (KDLEEVKQKVQ) form a 3; half-length repeat. 5 consecutive repeat copies span residues 122-142 (SYLDNFQKKVNEEVERYRDKV), 144-165 (PLGKELHKDAQQKLKELQEKLA), 166-187 (PLGQDIRQRAREYVDALRTHLG), 188-208 (SYTQGMRQGLAKRLEALKESA), and 209-229 (PVSEYQVKASKHLKTFSEKAK). Position 193 is a methionine sulfoxide (Met-193). A 9; half-length repeat occupies 230 to 240 (PALEDLRQGLM). Residue Met-240 is modified to Methionine sulfoxide. Residues 241–264 (PVMESLKASFLSSIDQASKQLSAQ) form repeat 10.

This sequence belongs to the apolipoprotein A1/A4/E family. Homodimer. Interacts with APOA1BP and CLU. Component of a sperm activating protein complex (SPAP), consisting of APOA1, an immunoglobulin heavy chain, an immunoglobulin light chain and albumin. Interacts with NDRG1. Interacts with SCGB3A2. Interacts with NAXE and YJEFN3. Glycosylated. Post-translationally, palmitoylated. In terms of processing, phosphorylation sites are present in the extracellular medium. Major protein of plasma HDL, also found in chylomicrons.

The protein resides in the secreted. Participates in the reverse transport of cholesterol from tissues to the liver for excretion by promoting cholesterol efflux from tissues and by acting as a cofactor for the lecithin cholesterol acyltransferase (LCAT). As part of the SPAP complex, activates spermatozoa motility. The sequence is that of Apolipoprotein A-I (Apoa1) from Heterocephalus glaber (Naked mole rat).